We begin with the raw amino-acid sequence, 104 residues long: uncharacterized protein (104 aa).

This is an uncharacterized protein from Acidithiobacillus ferridurans.